The following is a 158-amino-acid chain: MSEKYIVTWDMLQIHTRKLANRLVKKIHSWNGIIAVSRGGLVPSALLARELGLRCVDTVCIESYNYDCLKENRKIIKKAEGNGEKIIVIDDLVDTGGTAKIIRKLYPKACFVTIFAKPMGRSLVDNYIIDIPQNVWIEQPWDMSISYIPPLIQNYKIK.

5-phospho-alpha-D-ribose 1-diphosphate contacts are provided by residues 38-39 (RG) and 90-98 (DDLVDTGGT). Aspartate 91 lines the Mg(2+) pocket. Guanine contacts are provided by aspartate 94 and isoleucine 137. Positions 94 and 137 each coordinate xanthine. GMP is bound by residues 94–98 (DTGGT) and 136–137 (WI).

This sequence belongs to the purine/pyrimidine phosphoribosyltransferase family. XGPT subfamily. In terms of assembly, homotetramer. Requires Mg(2+) as cofactor.

It is found in the cell inner membrane. It carries out the reaction GMP + diphosphate = guanine + 5-phospho-alpha-D-ribose 1-diphosphate. It catalyses the reaction XMP + diphosphate = xanthine + 5-phospho-alpha-D-ribose 1-diphosphate. The enzyme catalyses IMP + diphosphate = hypoxanthine + 5-phospho-alpha-D-ribose 1-diphosphate. It participates in purine metabolism; GMP biosynthesis via salvage pathway; GMP from guanine: step 1/1. The protein operates within purine metabolism; XMP biosynthesis via salvage pathway; XMP from xanthine: step 1/1. Purine salvage pathway enzyme that catalyzes the transfer of the ribosyl-5-phosphate group from 5-phospho-alpha-D-ribose 1-diphosphate (PRPP) to the N9 position of the 6-oxopurines guanine and xanthine to form the corresponding ribonucleotides GMP (guanosine 5'-monophosphate) and XMP (xanthosine 5'-monophosphate), with the release of PPi. To a lesser extent, also acts on hypoxanthine. The protein is Xanthine-guanine phosphoribosyltransferase of Buchnera aphidicola subsp. Acyrthosiphon pisum (strain APS) (Acyrthosiphon pisum symbiotic bacterium).